A 416-amino-acid polypeptide reads, in one-letter code: Imidazolonepropionase (416 aa).

Fe(3+) is bound by residues His-78 and His-80. The Zn(2+) site is built by His-78 and His-80. 4-imidazolone-5-propanoate-binding residues include Arg-87, Tyr-150, and His-183. Tyr-150 contributes to the N-formimidoyl-L-glutamate binding site. His-248 is a Fe(3+) binding site. Zn(2+) is bound at residue His-248. Gln-251 serves as a coordination point for 4-imidazolone-5-propanoate. Residue Asp-323 participates in Fe(3+) binding. Asp-323 contacts Zn(2+). N-formimidoyl-L-glutamate-binding residues include Asn-325 and Gly-327. Thr-328 lines the 4-imidazolone-5-propanoate pocket.

Belongs to the metallo-dependent hydrolases superfamily. HutI family. Requires Zn(2+) as cofactor. It depends on Fe(3+) as a cofactor.

It localises to the cytoplasm. The catalysed reaction is 4-imidazolone-5-propanoate + H2O = N-formimidoyl-L-glutamate. It participates in amino-acid degradation; L-histidine degradation into L-glutamate; N-formimidoyl-L-glutamate from L-histidine: step 3/3. In terms of biological role, catalyzes the hydrolytic cleavage of the carbon-nitrogen bond in imidazolone-5-propanoate to yield N-formimidoyl-L-glutamate. It is the third step in the universal histidine degradation pathway. This is Imidazolonepropionase from Vibrio parahaemolyticus serotype O3:K6 (strain RIMD 2210633).